The chain runs to 755 residues: Cellulose synthase-like protein B3 (755 aa).

2 helical membrane passes run 24–44 (VVDL…ILLM) and 51–71 (WVVA…ITSI). Catalysis depends on residues D136 and D461. The next 6 helical transmembrane spans lie at 534 to 556 (YLYI…LPAY), 569 to 589 (VYLG…LWEF), 615 to 635 (LFSI…VFIV), 674 to 694 (FLPG…CSVG), 702 to 722 (GSGL…LPFL), and 733 to 753 (IPWS…VFSV).

It belongs to the glycosyltransferase 2 family. Plant cellulose synthase-like B subfamily. Expressed in young seedlings, primarily in the vascular tissue.

The protein resides in the golgi apparatus membrane. Its function is as follows. Thought to be a Golgi-localized beta-glycan synthase that polymerize the backbones of noncellulosic polysaccharides (hemicelluloses) of plant cell wall. This is Cellulose synthase-like protein B3 (CSLB3) from Arabidopsis thaliana (Mouse-ear cress).